Reading from the N-terminus, the 653-residue chain is Acetyl-coenzyme A synthetase 1 (653 aa).

Residues 191–194, threonine 311, and asparagine 335 contribute to the CoA site; that span reads RGGR. ATP is bound by residues 387-389, 411-416, aspartate 500, and arginine 515; these read GEP and DTWWQT. CoA is bound at residue serine 523. An ATP-binding site is contributed by arginine 526. Mg(2+) contacts are provided by valine 537, histidine 539, and valine 542. Residue arginine 584 coordinates CoA. Lysine 609 carries the post-translational modification N6-acetyllysine.

Belongs to the ATP-dependent AMP-binding enzyme family. Mg(2+) is required as a cofactor. Acetylated. Deacetylation by the SIR2-homolog deacetylase activates the enzyme.

The catalysed reaction is acetate + ATP + CoA = acetyl-CoA + AMP + diphosphate. Functionally, catalyzes the conversion of acetate into acetyl-CoA (AcCoA), an essential intermediate at the junction of anabolic and catabolic pathways. AcsA undergoes a two-step reaction. In the first half reaction, AcsA combines acetate with ATP to form acetyl-adenylate (AcAMP) intermediate. In the second half reaction, it can then transfer the acetyl group from AcAMP to the sulfhydryl group of CoA, forming the product AcCoA. This is Acetyl-coenzyme A synthetase 1 from Pseudomonas putida (strain ATCC 47054 / DSM 6125 / CFBP 8728 / NCIMB 11950 / KT2440).